The chain runs to 430 residues: RNA-binding protein 34 (430 aa).

Disordered stretches follow at residues 1–55 (MALE…GTGR), 72–123 (VPVP…ADRE), and 134–153 (EIHQ…VKVA). Residues Ser-14, Ser-28, and Ser-99 each carry the phosphoserine modification. The span at 23 to 34 (DGVRGSPPEDYR) shows a compositional bias: basic and acidic residues. A compositionally biased stretch (basic and acidic residues) spans 113-123 (TNAEKKLADRE). Lys-151 is modified (N6-acetyllysine). 2 consecutive RRM domains span residues 185-280 (RTVF…LASE) and 287-364 (RSVF…RSVN). Lys-242 participates in a covalent cross-link: Glycyl lysine isopeptide (Lys-Gly) (interchain with G-Cter in SUMO2). Residue Ser-288 is modified to Phosphoserine. Disordered regions lie at residues 365–395 (KEKF…KTAE) and 411–430 (KTKK…RKQK).

Belongs to the RRM RBM34 family.

The protein resides in the nucleus. It localises to the nucleolus. The polypeptide is RNA-binding protein 34 (RBM34) (Homo sapiens (Human)).